The chain runs to 132 residues: Small ribosomal subunit protein uS8 (132 aa).

It belongs to the universal ribosomal protein uS8 family. In terms of assembly, part of the 30S ribosomal subunit. Contacts proteins S5 and S12.

Its function is as follows. One of the primary rRNA binding proteins, it binds directly to 16S rRNA central domain where it helps coordinate assembly of the platform of the 30S subunit. This is Small ribosomal subunit protein uS8 from Geobacillus kaustophilus (strain HTA426).